We begin with the raw amino-acid sequence, 333 residues long: Holliday junction branch migration complex subunit RuvB (333 aa).

The segment at 1–182 (MDERLLSGES…FGVLSRLEYY (182 aa)) is large ATPase domain (RuvB-L). Residues Leu-21, Arg-22, Gly-63, Lys-66, Thr-67, Thr-68, 129–131 (EDF), Arg-172, Tyr-182, and Arg-219 each bind ATP. Thr-67 is a binding site for Mg(2+). The small ATPAse domain (RuvB-S) stretch occupies residues 183–253 (TVDQLSAIVE…ITQMALELLQ (71 aa)). The interval 256 to 333 (KLGLDHIDHK…QHFGMEMPKI (78 aa)) is head domain (RuvB-H). DNA is bound by residues Arg-311 and Arg-316.

Belongs to the RuvB family. As to quaternary structure, homohexamer. Forms an RuvA(8)-RuvB(12)-Holliday junction (HJ) complex. HJ DNA is sandwiched between 2 RuvA tetramers; dsDNA enters through RuvA and exits via RuvB. An RuvB hexamer assembles on each DNA strand where it exits the tetramer. Each RuvB hexamer is contacted by two RuvA subunits (via domain III) on 2 adjacent RuvB subunits; this complex drives branch migration. In the full resolvosome a probable DNA-RuvA(4)-RuvB(12)-RuvC(2) complex forms which resolves the HJ.

The protein localises to the cytoplasm. The catalysed reaction is ATP + H2O = ADP + phosphate + H(+). The RuvA-RuvB-RuvC complex processes Holliday junction (HJ) DNA during genetic recombination and DNA repair, while the RuvA-RuvB complex plays an important role in the rescue of blocked DNA replication forks via replication fork reversal (RFR). RuvA specifically binds to HJ cruciform DNA, conferring on it an open structure. The RuvB hexamer acts as an ATP-dependent pump, pulling dsDNA into and through the RuvAB complex. RuvB forms 2 homohexamers on either side of HJ DNA bound by 1 or 2 RuvA tetramers; 4 subunits per hexamer contact DNA at a time. Coordinated motions by a converter formed by DNA-disengaged RuvB subunits stimulates ATP hydrolysis and nucleotide exchange. Immobilization of the converter enables RuvB to convert the ATP-contained energy into a lever motion, pulling 2 nucleotides of DNA out of the RuvA tetramer per ATP hydrolyzed, thus driving DNA branch migration. The RuvB motors rotate together with the DNA substrate, which together with the progressing nucleotide cycle form the mechanistic basis for DNA recombination by continuous HJ branch migration. Branch migration allows RuvC to scan DNA until it finds its consensus sequence, where it cleaves and resolves cruciform DNA. This Bacillus cytotoxicus (strain DSM 22905 / CIP 110041 / 391-98 / NVH 391-98) protein is Holliday junction branch migration complex subunit RuvB.